The primary structure comprises 256 residues: Thiazole synthase (256 aa).

The active-site Schiff-base intermediate with DXP is the Lys95. 1-deoxy-D-xylulose 5-phosphate is bound by residues Gly156, 182–183, and 204–205; these read AG and NT.

The protein belongs to the ThiG family. In terms of assembly, homotetramer. Forms heterodimers with either ThiH or ThiS.

It is found in the cytoplasm. The enzyme catalyses [ThiS sulfur-carrier protein]-C-terminal-Gly-aminoethanethioate + 2-iminoacetate + 1-deoxy-D-xylulose 5-phosphate = [ThiS sulfur-carrier protein]-C-terminal Gly-Gly + 2-[(2R,5Z)-2-carboxy-4-methylthiazol-5(2H)-ylidene]ethyl phosphate + 2 H2O + H(+). Its pathway is cofactor biosynthesis; thiamine diphosphate biosynthesis. Catalyzes the rearrangement of 1-deoxy-D-xylulose 5-phosphate (DXP) to produce the thiazole phosphate moiety of thiamine. Sulfur is provided by the thiocarboxylate moiety of the carrier protein ThiS. In vitro, sulfur can be provided by H(2)S. This Escherichia coli (strain 55989 / EAEC) protein is Thiazole synthase.